We begin with the raw amino-acid sequence, 151 residues long: UPF0178 protein ESA_02916 (151 aa).

The protein belongs to the UPF0178 family.

This is UPF0178 protein ESA_02916 from Cronobacter sakazakii (strain ATCC BAA-894) (Enterobacter sakazakii).